A 378-amino-acid chain; its full sequence is UPF0754 membrane protein BCQ_0944 (378 aa).

Transmembrane regions (helical) follow at residues 1–21 (MNIWLSMLTTTGLGAIIGGFT) and 357–377 (YLGALLGGMIGIVQGLLLLFL).

Belongs to the UPF0754 family.

It localises to the cell membrane. In Bacillus cereus (strain Q1), this protein is UPF0754 membrane protein BCQ_0944.